The chain runs to 38 residues: Defensin (38 aa).

3 cysteine pairs are disulfide-bonded: Cys-4–Cys-26, Cys-11–Cys-34, and Cys-15–Cys-36.

The protein belongs to the invertebrate defensin family. Type 2 subfamily.

The protein localises to the secreted. In terms of biological role, mediates the inducible antibacterial activity in larvae of A.cyanea. This Aeshna cyanea (Southern hawker dragonfly) protein is Defensin.